The chain runs to 153 residues: Deoxyuridine 5'-triphosphate nucleotidohydrolase (153 aa).

Substrate is bound by residues 71–73 (RSG), asparagine 84, 88–90 (LID), and methionine 98.

Belongs to the dUTPase family. Mg(2+) is required as a cofactor.

It carries out the reaction dUTP + H2O = dUMP + diphosphate + H(+). It functions in the pathway pyrimidine metabolism; dUMP biosynthesis; dUMP from dCTP (dUTP route): step 2/2. In terms of biological role, this enzyme is involved in nucleotide metabolism: it produces dUMP, the immediate precursor of thymidine nucleotides and it decreases the intracellular concentration of dUTP so that uracil cannot be incorporated into DNA. This is Deoxyuridine 5'-triphosphate nucleotidohydrolase from Wigglesworthia glossinidia brevipalpis.